The following is a 445-amino-acid chain: F-box protein At5g10340 (445 aa).

The F-box domain occupies 64–112 (SMEELLPHDVIEYHIMVRLDVKTLLKFKSVSKQWMSTIQSPSFQERQLI).

The sequence is that of F-box protein At5g10340 from Arabidopsis thaliana (Mouse-ear cress).